Consider the following 379-residue polypeptide: Alkanesulfonate monooxygenase (379 aa).

This sequence belongs to the SsuD family.

It catalyses the reaction an alkanesulfonate + FMNH2 + O2 = an aldehyde + FMN + sulfite + H2O + 2 H(+). Its function is as follows. Catalyzes the desulfonation of aliphatic sulfonates. The sequence is that of Alkanesulfonate monooxygenase from Pseudomonas savastanoi pv. phaseolicola (strain 1448A / Race 6) (Pseudomonas syringae pv. phaseolicola (strain 1448A / Race 6)).